The following is a 509-amino-acid chain: Maturase K (509 aa).

It belongs to the intron maturase 2 family. MatK subfamily.

The protein resides in the plastid. It localises to the chloroplast. Its function is as follows. Usually encoded in the trnK tRNA gene intron. Probably assists in splicing its own and other chloroplast group II introns. This is Maturase K from Solanum lycopersicum (Tomato).